The primary structure comprises 87 residues: Long neurotoxin homolog (87 aa).

A signal peptide spans 1–21 (MKTLLLTLVVVTIVCLDLGYT). 5 disulfides stabilise this stretch: Cys-24-Cys-47, Cys-27-Cys-32, Cys-40-Cys-64, Cys-68-Cys-80, and Cys-81-Cys-86.

Expressed by the venom gland.

Its subcellular location is the secreted. Inhibits carbachol-induced muscle contraction in a reversible manner. This chain is Long neurotoxin homolog, found in Bungarus multicinctus (Many-banded krait).